The sequence spans 238 residues: ATP synthase subunit a, chloroplastic (238 aa).

The next 5 helical transmembrane spans lie at 27–47 (GQVLITSWVVLGILAVLSFLG), 86–106 (VPFLGTIFLFIFVSNWSGALL), 125–145 (INTTVALALLTSISYFYAGIS), 190–210 (LVVGVLVALVPLIIPIPIMLL), and 211–231 (GVFTSAIQALVFATLAGAYIN).

Belongs to the ATPase A chain family. As to quaternary structure, F-type ATPases have 2 components, F(1) - the catalytic core - and F(0) - the membrane proton channel. F(1) has five subunits: alpha(3), beta(3), gamma(1), delta(1), epsilon(1). F(0) has four main subunits: a(1), b(1), b'(1) and c(10-14). The alpha and beta chains form an alternating ring which encloses part of the gamma chain. F(1) is attached to F(0) by a central stalk formed by the gamma and epsilon chains, while a peripheral stalk is formed by the delta, b and b' chains.

It localises to the plastid. The protein resides in the chloroplast thylakoid membrane. Its function is as follows. F(1)F(0) ATP synthase produces ATP from ADP in the presence of a proton or sodium gradient. F-type ATPases consist of two structural domains, F(1) containing the extramembraneous catalytic core and F(0) containing the membrane proton channel, linked together by a central stalk and a peripheral stalk. During catalysis, ATP synthesis in the catalytic domain of F(1) is coupled via a rotary mechanism of the central stalk subunits to proton translocation. The chain is ATP synthase subunit a, chloroplastic from Chlamydomonas reinhardtii (Chlamydomonas smithii).